The sequence spans 402 residues: S-adenosylmethionine synthase (402 aa).

His16 contacts ATP. Asp18 lines the Mg(2+) pocket. A K(+)-binding site is contributed by Glu44. L-methionine is bound by residues Glu57 and Gln103. A flexible loop region spans residues 103-113; the sequence is QSPDIAQGVDT. Residues 178–180, 249–250, Asp258, 264–265, Ala281, and Lys285 each bind ATP; these read DGK, KF, and RK. L-methionine is bound at residue Asp258. Residue Lys289 participates in L-methionine binding.

Belongs to the AdoMet synthase family. As to quaternary structure, homotetramer; dimer of dimers. Requires Mg(2+) as cofactor. K(+) serves as cofactor.

The protein localises to the cytoplasm. It carries out the reaction L-methionine + ATP + H2O = S-adenosyl-L-methionine + phosphate + diphosphate. The protein operates within amino-acid biosynthesis; S-adenosyl-L-methionine biosynthesis; S-adenosyl-L-methionine from L-methionine: step 1/1. In terms of biological role, catalyzes the formation of S-adenosylmethionine (AdoMet) from methionine and ATP. The overall synthetic reaction is composed of two sequential steps, AdoMet formation and the subsequent tripolyphosphate hydrolysis which occurs prior to release of AdoMet from the enzyme. The protein is S-adenosylmethionine synthase of Mycolicibacterium vanbaalenii (strain DSM 7251 / JCM 13017 / BCRC 16820 / KCTC 9966 / NRRL B-24157 / PYR-1) (Mycobacterium vanbaalenii).